Here is a 286-residue protein sequence, read N- to C-terminus: Bifunctional protein FolD (286 aa).

NADP(+) contacts are provided by residues 165–167 (GRS) and S190.

It belongs to the tetrahydrofolate dehydrogenase/cyclohydrolase family. In terms of assembly, homodimer.

It catalyses the reaction (6R)-5,10-methylene-5,6,7,8-tetrahydrofolate + NADP(+) = (6R)-5,10-methenyltetrahydrofolate + NADPH. It carries out the reaction (6R)-5,10-methenyltetrahydrofolate + H2O = (6R)-10-formyltetrahydrofolate + H(+). It participates in one-carbon metabolism; tetrahydrofolate interconversion. Its function is as follows. Catalyzes the oxidation of 5,10-methylenetetrahydrofolate to 5,10-methenyltetrahydrofolate and then the hydrolysis of 5,10-methenyltetrahydrofolate to 10-formyltetrahydrofolate. The chain is Bifunctional protein FolD from Staphylococcus epidermidis (strain ATCC 35984 / DSM 28319 / BCRC 17069 / CCUG 31568 / BM 3577 / RP62A).